Consider the following 97-residue polypeptide: Aspartyl/glutamyl-tRNA(Asn/Gln) amidotransferase subunit C (97 aa).

It belongs to the GatC family. As to quaternary structure, heterotrimer of A, B and C subunits.

It carries out the reaction L-glutamyl-tRNA(Gln) + L-glutamine + ATP + H2O = L-glutaminyl-tRNA(Gln) + L-glutamate + ADP + phosphate + H(+). It catalyses the reaction L-aspartyl-tRNA(Asn) + L-glutamine + ATP + H2O = L-asparaginyl-tRNA(Asn) + L-glutamate + ADP + phosphate + 2 H(+). Its function is as follows. Allows the formation of correctly charged Asn-tRNA(Asn) or Gln-tRNA(Gln) through the transamidation of misacylated Asp-tRNA(Asn) or Glu-tRNA(Gln) in organisms which lack either or both of asparaginyl-tRNA or glutaminyl-tRNA synthetases. The reaction takes place in the presence of glutamine and ATP through an activated phospho-Asp-tRNA(Asn) or phospho-Glu-tRNA(Gln). The protein is Aspartyl/glutamyl-tRNA(Asn/Gln) amidotransferase subunit C of Picosynechococcus sp. (strain ATCC 27264 / PCC 7002 / PR-6) (Agmenellum quadruplicatum).